The sequence spans 179 residues: MSRLREKYEKEVVPALMERFGYKNIMQVPKVEKVVINIGVGEAKENPKALEAAVDDLTMIAGQKPVITRAKRSIANFKIRKGMPIGVKVTLRGERMYEFMDKLFNIALPRVRDFKGVSPNSFDGRGNYALGIKEQLIFPEIDYDKIDKIRGMDIIIVTTAKTDEEAKGLLELLGMPFAK.

This sequence belongs to the universal ribosomal protein uL5 family. Part of the 50S ribosomal subunit; part of the 5S rRNA/L5/L18/L25 subcomplex. Contacts the 5S rRNA and the P site tRNA. Forms a bridge to the 30S subunit in the 70S ribosome.

Functionally, this is one of the proteins that bind and probably mediate the attachment of the 5S RNA into the large ribosomal subunit, where it forms part of the central protuberance. In the 70S ribosome it contacts protein S13 of the 30S subunit (bridge B1b), connecting the 2 subunits; this bridge is implicated in subunit movement. Contacts the P site tRNA; the 5S rRNA and some of its associated proteins might help stabilize positioning of ribosome-bound tRNAs. The chain is Large ribosomal subunit protein uL5 from Thermoanaerobacter sp. (strain X514).